The chain runs to 114 residues: MSEEFQESDIIFSDQSKISTSSRYTKLYNSRNDEKKGTRRHETAEKTSPVRIPTNNFRCLEWDTTEEEDDKTPPHVIIERRMKEQIAFSACTLKGRDLSRHRNSVLRMTGFLEA.

Residues 23–50 (RYTKLYNSRNDEKKGTRRHETAEKTSPV) are disordered. The span at 31-45 (RNDEKKGTRRHETAE) shows a compositional bias: basic and acidic residues.

The protein belongs to the senescence regulator S40 family.

It localises to the cytoplasm. The polypeptide is Protein S40-2 (Arabidopsis thaliana (Mouse-ear cress)).